Reading from the N-terminus, the 315-residue chain is Glutathione synthetase (315 aa).

Residues 125–310 (KLYTAWFADL…ITGMLMDAIE (186 aa)) enclose the ATP-grasp domain. 151-207 (WEKHGDIIMKPLDGMGGASIFRVKEGDPNIGVIAETLTELGNRYCMAQNYLPAIKDG) contacts ATP. Mg(2+)-binding residues include glutamate 281 and asparagine 283.

It belongs to the prokaryotic GSH synthase family. Requires Mg(2+) as cofactor. The cofactor is Mn(2+).

The enzyme catalyses gamma-L-glutamyl-L-cysteine + glycine + ATP = glutathione + ADP + phosphate + H(+). It participates in sulfur metabolism; glutathione biosynthesis; glutathione from L-cysteine and L-glutamate: step 2/2. The polypeptide is Glutathione synthetase (Salmonella typhi).